A 564-amino-acid chain; its full sequence is MILARDDKWTLGSIALIFVLLIGFALLFLLERFRVKEKSRTFKDCVNVYQCPSKGERVYLALRHWFIFLATHKAQMTLILSPLVMLVTIPFTGKETKNSIASYDWNLTGVAARLGYLSCGLFFVSYFFSLKNNPFCLMLFSSHEKMNYLHRWLSVYAVLISVLHGILFMIFSAQSYKPLLYDKISIYGYFITVVLFLMTVASLPSVRRKFFEWFFVLHHTCSVLIIFLIWLHHPRTIVYMKACIIIYAFDRGCRLFRSIWNRSNFRIYLLNEDMIYMVGRKPKRSFFALPWAAGSHVYINIPSLSYWQVHPFTLASAPFDDFIELFVAVHSGFTERLANRLYSMPHEYPNFSLAPGTPESLSNTYRELNSFKSYAVEIENTAQGHTYEPEDLYLETTVFMDGPYGTTSNVFKEYSYVLLIAGGVGFSYTLPILRDLILKECNVTSITFIWSCRSLSLLKVASKSLNSLLHQSNVRLKIINHFTGSISCKESSEFSNQTTENSEMEFFDDRPDLDMYIQKFFDYVGYQTAALAACGSQSFLKRIKNSVNKSISSTTDIYQHYEEL.

2 consecutive transmembrane segments (helical) span residues 10 to 30 (TLGS…LFLL) and 66 to 86 (FIFL…LVML). A glycan (N-linked (GlcNAc...) asparagine) is linked at N106. The chain crosses the membrane as a helical span at residues 110 to 130 (VAARLGYLSCGLFFVSYFFSL). The Ferric oxidoreductase domain occupies 114 to 229 (LGYLSCGLFF…TCSVLIIFLI (116 aa)). Heme-binding residues include H150 and H164. 3 consecutive transmembrane segments (helical) span residues 152–172 (WLSV…MIFS), 184–204 (ISIY…ASLP), and 210–230 (FFEW…FLIW). 2 residues coordinate heme: H218 and H232. The 157-residue stretch at 254–410 (RLFRSIWNRS…DGPYGTTSNV (157 aa)) folds into the FAD-binding FR-type domain. N261 is a glycosylation site (N-linked (GlcNAc...) asparagine). Residue 310 to 316 (HPFTLAS) coordinates FAD. A glycan (N-linked (GlcNAc...) asparagine) is linked at N350. 419–427 (LIAGGVGFS) provides a ligand contact to NAD(+). Residues N442, N496, and N548 are each glycosylated (N-linked (GlcNAc...) asparagine).

Belongs to the ferric reductase (FRE) family. It depends on FAD as a cofactor. Heme serves as cofactor.

The protein localises to the cell membrane. Its subcellular location is the endoplasmic reticulum membrane. It catalyses the reaction 2 a Fe(II)-siderophore + NADP(+) + H(+) = 2 a Fe(III)-siderophore + NADPH. In terms of biological role, metalloreductase responsible for reducing extracellular iron and copper prior to import. Catalyzes the reductive uptake of Fe(3+)-salts and Fe(3+) bound to catecholate or hydroxamate siderophores. Fe(3+) is reduced to Fe(2+), which then dissociates from the siderophore and can be imported by the high-affinity Fe(2+) transport complex in the plasma membrane. Also participates in Cu(2+) reduction and Cu(+) uptake. The polypeptide is Ferric/cupric reductase transmembrane component 2 (frp2) (Schizosaccharomyces pombe (strain 972 / ATCC 24843) (Fission yeast)).